Consider the following 329-residue polypeptide: G-protein coupled bile acid receptor 1 (329 aa).

Residues Met1–Glu18 are Extracellular-facing. N-linked (GlcNAc...) asparagine glycosylation occurs at Asn5. A helical membrane pass occupies residues Leu19 to Val39. Residues Leu40 to Ala49 lie on the Cytoplasmic side of the membrane. Residues Gly50 to Leu70 traverse the membrane as a helical segment. The Extracellular segment spans residues Pro71 to Cys84. A glycan (N-linked (GlcNAc...) asparagine) is linked at Asn75. Cys84 and Cys154 are joined by a disulfide. The chain crosses the membrane as a helical span at residues Leu85 to Val105. Residues His106 to Arg124 lie on the Cytoplasmic side of the membrane. Residues Leu125–Trp145 form a helical membrane-spanning segment. Over Asn146–Gln157 the chain is Extracellular. Residue Asn153 is glycosylated (N-linked (GlcNAc...) asparagine). A helical membrane pass occupies residues Ala158–Gly178. Over Ala179 to Thr229 the chain is Cytoplasmic. A helical membrane pass occupies residues Leu230 to Tyr250. Over Glu251 to Thr260 the chain is Extracellular. The chain crosses the membrane as a helical span at residues Leu261–Leu281. Over Gly282–Asn329 the chain is Cytoplasmic. The segment at Lys306–Asn329 is disordered. Positions Gly311–Asn329 are enriched in polar residues.

It belongs to the G-protein coupled receptor 1 family.

It localises to the cell membrane. Receptor for bile acid. Bile acid-binding induces its internalization, activation of extracellular signal-regulated kinase and intracellular cAMP production. May be involved in the suppression of macrophage functions by bile acids. Involved in bile acid promoted GLP1R secretion. The chain is G-protein coupled bile acid receptor 1 (Gpbar1) from Rattus norvegicus (Rat).